The chain runs to 628 residues: Probable potassium transport system protein Kup (628 aa).

A run of 12 helical transmembrane segments spans residues 12–32 (ALPLAAEIGALGVVFGDIGTS), 57–77 (LLSLITWSIILSVTVKYVMLV), 106–126 (WYLLAAGLVGAAMLIGDGVLT), 141–161 (ISPALLDWIVPLTVLVLAAVF), 174–194 (FYGPIMVLWFGSLAVLGVYGI), 219–239 (LAGVIIGACFLAITGGEALYA), 253–273 (WLFVAMPALLLNYFGQGAILL), 295–315 (LLFLATAATVIASQSIITGVF), 343–363 (IYVGRLNWLLMVACIAVVLGF), 369–389 (LASAYGIAVAFAMVTTSILFV), 402–422 (AVIALGIGLFSLDAAFASANL), and 425–445 (LHEGGWLPLTIAGIVIFVMVS).

Belongs to the HAK/KUP transporter (TC 2.A.72) family.

It localises to the cell inner membrane. The catalysed reaction is K(+)(in) + H(+)(in) = K(+)(out) + H(+)(out). Functionally, transport of potassium into the cell. Likely operates as a K(+):H(+) symporter. This is Probable potassium transport system protein Kup from Azorhizobium caulinodans (strain ATCC 43989 / DSM 5975 / JCM 20966 / LMG 6465 / NBRC 14845 / NCIMB 13405 / ORS 571).